Here is a 452-residue protein sequence, read N- to C-terminus: Agmatine coumaroyltransferase (452 aa).

Active-site proton acceptor residues include histidine 163 and aspartate 396.

Belongs to the plant acyltransferase family.

The catalysed reaction is 4-coumaroyl-CoA + agmatine = N-(4-guanidinobutyl)-4-hydroxycinnamamide + CoA + H(+). In terms of biological role, involved in the biosynthesis of hydroxycinnamic acid amides, which play a role in defense against pathogens. Agmatine is the preferred acyl acceptor, lower activity is observed towards putrescine. The preferred acyl donor is p-coumaroyl-CoA, lower activity is seen towards feruloyl-CoA. The polypeptide is Agmatine coumaroyltransferase (Arabidopsis thaliana (Mouse-ear cress)).